The sequence spans 850 residues: MLLVRTTSLNVSRMPVPCLARGIGILKGKYRLANLMNAQPSVRHVSSEIQQKDQQAGESNTATDTGVIHKSDEETLIYFDNVYARATSVWNPTLWYNLLLRNQSRDAVREKIRNLASPPNNPIYGLELKSTIPVKRDGGVFATFVVPPKYTKAQVNSLIQQNTARESSKNLLSYFTRVSAFPVKGSPWIEDLRRLPSTTIVIKFQGPALTEEEIYSLFRRYGTIIDIFPPTAANNNVAKVRYRSFRGAISAKNCVSGIEIHNTVLHIQYENIIRGHLVSNFFTNHTRIAIPVLFALLSIFAVLVFDPIREFSIEQKITHKYSLSWDNKFWKQLKTLTSSTMTSIKYYWGGPDDNHQRKHLWEERIEKVNDLKMWLEENNNTFVVIRGPRGSGKHDLVMQHTLQNRANVLYLDCDKLIKSRTDPKFLKNAASQLGYFPIFPWIDSVTGVLDLTVQGLTGQKTGLSETKESQFRNMLTTSLMSIRRIALKNYKAFVSTGDGTVNVKEEDYLQQHPEAKPVIVIDRFEGKSEINGFVYKELSDWAAMLVQMNIAHVIFLTETVASNQRLSESLPNQVFKNLILSDASKENSRNYVLSQLEDYLYYNKKSKGENVKEPESEKEIAENNDSDSEADTSVKEAEVILNEKELQEIDASLEPLGGRMLDLQAFVRRVKSGEEPSEALDKMIEQASEQITQMFLSDKIDSNKSAQAWELIELLSANPVIPFREIVNKPLFKAAPETGIMELENNGLITVSRDRGVLQEIRPAKPLYRAAFTYLINDPELAKVLKTRYLLKVVGFETGRIKKWEEELKPLGKVPDQKLFKTRLDYLSGKINASNAVITKCEEEIKNLSK.

Residues 1–44 (MLLVRTTSLNVSRMPVPCLARGIGILKGKYRLANLMNAQPSVRH) constitute a mitochondrion transit peptide. Residues 44–66 (HVSSEIQQKDQQAGESNTATDTG) are disordered. At 45–287 (VSSEIQQKDQ…VSNFFTNHTR (243 aa)) the chain is on the mitochondrial matrix side. Over residues 47-64 (SEIQQKDQQAGESNTATD) the composition is skewed to polar residues. One can recognise an RRM domain in the interval 198–272 (TTIVIKFQGP…TVLHIQYENI (75 aa)). A helical membrane pass occupies residues 288-308 (IAIPVLFALLSIFAVLVFDPI). The Mitochondrial intermembrane segment spans residues 309–850 (REFSIEQKIT…CEEEIKNLSK (542 aa)). A compositionally biased stretch (basic and acidic residues) spans 607–621 (KGENVKEPESEKEIA). The segment at 607 to 633 (KGENVKEPESEKEIAENNDSDSEADTS) is disordered.

It belongs to the YME2 family.

It localises to the mitochondrion inner membrane. Its function is as follows. Plays a role in maintaining the mitochondrial genome and in controlling the mtDNA escape. Involved in the regulation of mtDNA nucleotide structure and number. May have a dispensable role in early maturation of pre-rRNA. The sequence is that of Mitochondrial escape protein 2 (YME2) from Saccharomyces cerevisiae (strain YJM789) (Baker's yeast).